A 481-amino-acid chain; its full sequence is Glutamyl-tRNA(Gln) amidotransferase subunit A (481 aa).

Residues Lys74 and Ser149 each act as charge relay system in the active site. Ser173 (acyl-ester intermediate) is an active-site residue.

Belongs to the amidase family. GatA subfamily. As to quaternary structure, heterotrimer of A, B and C subunits.

The enzyme catalyses L-glutamyl-tRNA(Gln) + L-glutamine + ATP + H2O = L-glutaminyl-tRNA(Gln) + L-glutamate + ADP + phosphate + H(+). Functionally, allows the formation of correctly charged Gln-tRNA(Gln) through the transamidation of misacylated Glu-tRNA(Gln) in organisms which lack glutaminyl-tRNA synthetase. The reaction takes place in the presence of glutamine and ATP through an activated gamma-phospho-Glu-tRNA(Gln). The polypeptide is Glutamyl-tRNA(Gln) amidotransferase subunit A (Francisella philomiragia subsp. philomiragia (strain ATCC 25017 / CCUG 19701 / FSC 153 / O#319-036)).